A 271-amino-acid polypeptide reads, in one-letter code: Shikimate dehydrogenase (NADP(+)) (271 aa).

Shikimate contacts are provided by residues Ser14 to Ser16 and Thr61. The active-site Proton acceptor is the Lys65. 2 residues coordinate shikimate: Asn86 and Asp101. NADP(+)-binding positions include Gly125–Ala129 and Ile212. Tyr214 lines the shikimate pocket. Gly235 is an NADP(+) binding site.

Belongs to the shikimate dehydrogenase family. Homodimer.

The catalysed reaction is shikimate + NADP(+) = 3-dehydroshikimate + NADPH + H(+). It functions in the pathway metabolic intermediate biosynthesis; chorismate biosynthesis; chorismate from D-erythrose 4-phosphate and phosphoenolpyruvate: step 4/7. Functionally, involved in the biosynthesis of the chorismate, which leads to the biosynthesis of aromatic amino acids. Catalyzes the reversible NADPH linked reduction of 3-dehydroshikimate (DHSA) to yield shikimate (SA). This chain is Shikimate dehydrogenase (NADP(+)), found in Clostridium perfringens (strain ATCC 13124 / DSM 756 / JCM 1290 / NCIMB 6125 / NCTC 8237 / Type A).